Consider the following 603-residue polypeptide: Beta-hexosaminidase (603 aa).

The N-terminal stretch at 1 to 19 (MAYFRLYAVLLAVASSVAA) is a signal peptide. Catalysis depends on charge relay system residues aspartate 225, histidine 278, and glutamate 349. Cysteine 293 and cysteine 354 are oxidised to a cystine. Asparagine 356 is a glycosylation site (N-linked (GlcNAc...) asparagine). Cysteine 451 and cysteine 486 are disulfide-bonded. 2 N-linked (GlcNAc...) asparagine glycosylation sites follow: asparagine 503 and asparagine 528. A disulfide bridge links cysteine 586 with cysteine 593.

The protein belongs to the glycosyl hydrolase 20 family. In terms of assembly, homodimer.

Its subcellular location is the secreted. It carries out the reaction Hydrolysis of terminal non-reducing N-acetyl-D-hexosamine residues in N-acetyl-beta-D-hexosaminides.. Its function is as follows. Part of the binary chitinolytic system. Involved in hydrolysis of chitobiose and higher chito-oligomers (produced from cell wall chitin by endochitinases), thus contributing to the formation of germ tubes, fruit-bodies and septa during hyphenation. Hydrolyzes synthetic substrates p-nitrophenyl-beta-N-acetyl-glucosamine (pNP-beta-GlcNAc), p-nitrophenyl-beta-N-acetyl-galactosamine (pNP-beta-GalNAc) and 5-bromo-4-chloro-3-indoyl-beta-D-N-glucosaminide (X-GlcNAc). The sequence is that of Beta-hexosaminidase from Emericella nidulans (Aspergillus nidulans).